We begin with the raw amino-acid sequence, 1710 residues long: Protein NETWORKED 1B (1710 aa).

One can recognise an NAB domain in the interval 13-92 (YSWWWDSHIP…ERYDHTTVEL (80 aa)). The interval 113–159 (EDSASSSSEPRTEADTEALQKDGTKSKRSFSQMNKLDGTSDSHEADS) is disordered. 2 stretches are compositionally biased toward basic and acidic residues: residues 122 to 137 (PRTE…DGTK) and 150 to 159 (GTSDSHEADS). 6 coiled-coil regions span residues 152–446 (SDSH…ELGA), 474–546 (QMLR…EIHC), 579–883 (VKKL…IDSL), 974–1021 (HQCG…FESL), 1095–1259 (VSSL…LQEK), and 1285–1336 (LILE…LSAY). Residues 1409-1448 (RLSRQITRSTSQKRRDRRKIENIQPDDQVTGESRQPRLRP) form a disordered region. Residues 1559–1665 (RRLSSLRISL…VLKLEDGTKS (107 aa)) are a coiled coil.

Belongs to the NET family. Expressed in root meristems and at very low levels throughout mature vasculature.

In terms of biological role, plant-specific actin binding protein. May be part of a membrane-cytoskeletal adapter complex. The protein is Protein NETWORKED 1B of Arabidopsis thaliana (Mouse-ear cress).